Here is a 153-residue protein sequence, read N- to C-terminus: Calmodulin-like protein 4 (153 aa).

EF-hand domains lie at 8-43, 44-79, 81-116, and 117-152; these read DAIQ…LGTC, PTPG…QQKQ, DPEN…MGEK, and LTPE…PVPD.

Belongs to the calmodulin family. In terms of assembly, associates with the IMAC/intermicrovillar adhesion complex.

It localises to the cell projection. Its subcellular location is the microvillus. In terms of biological role, as part of the intermicrovillar adhesion complex/IMAC plays a role in epithelial brush border differentiation, controlling microvilli organization and length. Acts as a light chain for MYO7B and is required for efficient targeting of the IMAC to the tips of border brush microvilli. This chain is Calmodulin-like protein 4 (calml4), found in Xenopus tropicalis (Western clawed frog).